The chain runs to 455 residues: Signal recognition particle 54 kDa protein (455 aa).

Residues 104–111 (GLYGHGKT), 184–188 (DTSGR), and 242–245 (TKMD) contribute to the GTP site.

It belongs to the GTP-binding SRP family. SRP54 subfamily. Part of the signal recognition particle protein translocation system, which is composed of SRP and FtsY. Archaeal SRP consists of a 7S RNA molecule of 300 nucleotides and two protein subunits: SRP54 and SRP19.

Its subcellular location is the cytoplasm. It carries out the reaction GTP + H2O = GDP + phosphate + H(+). In terms of biological role, involved in targeting and insertion of nascent membrane proteins into the cytoplasmic membrane. Binds to the hydrophobic signal sequence of the ribosome-nascent chain (RNC) as it emerges from the ribosomes. The SRP-RNC complex is then targeted to the cytoplasmic membrane where it interacts with the SRP receptor FtsY. The polypeptide is Signal recognition particle 54 kDa protein (Thermoplasma volcanium (strain ATCC 51530 / DSM 4299 / JCM 9571 / NBRC 15438 / GSS1)).